The sequence spans 474 residues: Citrate synthase 4, mitochondrial (474 aa).

Residues 1-16 constitute a mitochondrion transit peptide; sequence MVFFRSVSAFTRLRSR. Catalysis depends on residues histidine 308, histidine 354, and aspartate 409.

This sequence belongs to the citrate synthase family. In terms of assembly, homodimer.

It is found in the mitochondrion matrix. It catalyses the reaction oxaloacetate + acetyl-CoA + H2O = citrate + CoA + H(+). Its pathway is carbohydrate metabolism; tricarboxylic acid cycle; isocitrate from oxaloacetate: step 1/2. The protein is Citrate synthase 4, mitochondrial (CSY4) of Arabidopsis thaliana (Mouse-ear cress).